The sequence spans 494 residues: Ketol-acid reductoisomerase (NADP(+)) (494 aa).

The KARI N-terminal Rossmann domain occupies 14–208 (LDQLGRCRFM…GGHRAGCLAS (195 aa)). NADP(+) is bound by residues 45 to 48 (CGAQ), arginine 68, arginine 76, serine 78, and 108 to 110 (DKQ). Histidine 132 is an active-site residue. Glycine 158 is an NADP(+) binding site. KARI C-terminal knotted domains lie at 209–344 (SFVA…NYPT) and 345–487 (TDVK…MKDM). Mg(2+)-binding residues include aspartate 217, glutamate 221, glutamate 389, and glutamate 393. Serine 414 is a substrate binding site.

It belongs to the ketol-acid reductoisomerase family. It depends on Mg(2+) as a cofactor.

The enzyme catalyses (2R)-2,3-dihydroxy-3-methylbutanoate + NADP(+) = (2S)-2-acetolactate + NADPH + H(+). It carries out the reaction (2R,3R)-2,3-dihydroxy-3-methylpentanoate + NADP(+) = (S)-2-ethyl-2-hydroxy-3-oxobutanoate + NADPH + H(+). It functions in the pathway amino-acid biosynthesis; L-isoleucine biosynthesis; L-isoleucine from 2-oxobutanoate: step 2/4. It participates in amino-acid biosynthesis; L-valine biosynthesis; L-valine from pyruvate: step 2/4. Involved in the biosynthesis of branched-chain amino acids (BCAA). Catalyzes an alkyl-migration followed by a ketol-acid reduction of (S)-2-acetolactate (S2AL) to yield (R)-2,3-dihydroxy-isovalerate. In the isomerase reaction, S2AL is rearranged via a Mg-dependent methyl migration to produce 3-hydroxy-3-methyl-2-ketobutyrate (HMKB). In the reductase reaction, this 2-ketoacid undergoes a metal-dependent reduction by NADPH to yield (R)-2,3-dihydroxy-isovalerate. This chain is Ketol-acid reductoisomerase (NADP(+)), found in Vibrio cholerae serotype O1 (strain ATCC 39541 / Classical Ogawa 395 / O395).